A 943-amino-acid polypeptide reads, in one-letter code: Glutamate receptor ionotropic, NMDA 1 (943 aa).

Positions 1–20 (MSTMRLLTLALLFSCSFARA) are cleaved as a signal peptide. The Extracellular segment spans residues 21–580 (ACDPKIVNIG…TLDSFMQPFQ (560 aa)). Asparagine 61, asparagine 224, asparagine 260, asparagine 297, asparagine 321, asparagine 371, asparagine 389, asparagine 461, asparagine 492, and asparagine 512 each carry an N-linked (GlcNAc...) asparagine glycan. Cysteine 79 and cysteine 329 are disulfide-bonded. 2 disulfides stabilise this stretch: cysteine 441-cysteine 475 and cysteine 457-cysteine 476. Proline 537, threonine 539, and arginine 544 together coordinate glycine. The helical transmembrane segment at 581 to 601 (STLWLLVGLSVHVVAVMLYLL) threads the bilayer. Residues 602-623 (DRFSPFGRFKVNSEEEEEDALT) are Cytoplasmic-facing. The discontinuously helical intramembrane region spans 624-645 (LSSAMWFSWGVLLNSGIGEGAP). Positions 624–645 (LSSAMWFSWGVLLNSGIGEGAP) are pore-forming. The Cytoplasmic segment spans residues 646 to 651 (RSFSAR). Residues 652–668 (ILGMVWAGFAMIIVASY) form a helical membrane-spanning segment. Residues 669–833 (TANLAAFLVL…NAPATLTFEN (165 aa)) are Extracellular-facing. N-linked (GlcNAc...) asparagine glycosylation is present at asparagine 695. Residues serine 709 and aspartate 753 each contribute to the glycine site. Cysteines 765 and 819 form a disulfide. Asparagine 792 carries N-linked (GlcNAc...) asparagine glycosylation. A helical membrane pass occupies residues 834–854 (MAGVFMLVAGGIVAGIFLIFI). Over 855–943 (EIAYKRHKDA…LSDPSVSTVV (89 aa)) the chain is Cytoplasmic. Phosphoserine is present on residues serine 910, serine 911, serine 917, and serine 918.

It belongs to the glutamate-gated ion channel (TC 1.A.10.1) family. NR1/GRIN1 subfamily. As to quaternary structure, heterotetramer; the NMDAR subunits are modular and harbor tiered domains that function in concert to regulate opening and closing of the cation-selective ion channel pore. Forms heterotetrameric channels composed of two GluN1/zeta subunits (GRIN1), and two identical GluN2/epsilon subunits (GRIN2A, GRIN2B, GRIN2C or GRIN2D) or GluN3 subunits (GRIN3A or GRIN3B) (in vitro). Can also form heterotetrameric channels that contain at least two GluN1 subunits and at least two different GluN2 subunits (or a combination of one GluN2 and one GluN3 subunits) (in vitro). In vivo, the subunit composition may vary in function of the expression levels of the different subunits. Found in a complex with GRIN2A or GRIN2B, GRIN3A and PPP2CB. Found in a complex with GRIN2A or GRIN2B and GRIN3B. Interacts with SNX27 (via PDZ domain); the interaction is required for recycling to the plasma membrane when endocytosed and prevent degradation in lysosomes. Interacts with DLG4 and MPDZ. Interacts with LRFN1 and LRFN2. Interacts with MYZAP. Found in a complex with DLG4 and PRR7. Found in a complex with GRIN2B and PRR7. Interacts with PRR7; the interaction is reduced following NMDA receptor activity. In terms of processing, NMDA is probably regulated by C-terminal phosphorylation of an isoform of GRIN1 by PKC. Dephosphorylated on Ser-897 probably by protein phosphatase 2A (PPP2CB). Its phosphorylated state is influenced by the formation of the NMDAR-PPP2CB complex and the NMDAR channel activity.

The protein resides in the cell membrane. The protein localises to the postsynaptic cell membrane. It is found in the postsynaptic density membrane. Its subcellular location is the synaptic cell membrane. It catalyses the reaction Ca(2+)(in) = Ca(2+)(out). The enzyme catalyses Na(+)(in) = Na(+)(out). The catalysed reaction is K(+)(in) = K(+)(out). Component of N-methyl-D-aspartate (NMDA) receptors (NMDARs) that function as heterotetrameric, ligand-gated cation channels with high calcium permeability and voltage-dependent block by Mg(2+). NMDARs participate in synaptic plasticity for learning and memory formation by contributing to the long-term potentiation (LTP). Channel activation requires binding of the neurotransmitter L-glutamate to the GluN2 subunit, glycine or D-serine binding to the GluN1 subunit, plus membrane depolarization to eliminate channel inhibition by Mg(2+). NMDARs mediate simultaneously the potasium efflux and the influx of calcium and sodium. Each GluN2 or GluN3 subunit confers differential attributes to channel properties, including activation, deactivation and desensitization kinetics, pH sensitivity, Ca2(+) permeability, and binding to allosteric modulators. The GluN3 subunits confer distinctive ion channel activation mechanism, which relies exclusively on glycine and does not involve glutamate. The sequence is that of Glutamate receptor ionotropic, NMDA 1 from Canis lupus familiaris (Dog).